We begin with the raw amino-acid sequence, 318 residues long: tRNA-modifying protein YgfZ (318 aa).

Residues W24 and W185 each contribute to the folate site.

This sequence belongs to the tRNA-modifying YgfZ family.

It localises to the cytoplasm. In terms of biological role, folate-binding protein involved in regulating the level of ATP-DnaA and in the modification of some tRNAs. It is probably a key factor in regulatory networks that act via tRNA modification, such as initiation of chromosomal replication. This chain is tRNA-modifying protein YgfZ, found in Buchnera aphidicola subsp. Baizongia pistaciae (strain Bp).